The primary structure comprises 1641 residues: Ophiophagus venom factor (1641 aa).

An N-terminal signal peptide occupies residues 1 to 22 (MEGMALYLVAALLIGFPGSSHG). 2 N-linked (GlcNAc...) asparagine glycosylation sites follow: Asn181 and Asn209. Mg(2+) is bound by residues Pro507, Asp530, Val531, and Asp533. 12 disulfide bridges follow: Cys535-Cys796, Cys604-Cys639, Cys672-Cys699, Cys673-Cys706, Cys686-Cys707, Cys852-Cys1491, Cys1336-Cys1467, Cys1367-Cys1436, Cys1484-Cys1489, Cys1496-Cys1568, Cys1515-Cys1639, and Cys1615-Cys1624. Positions 645 to 728 (RRRRSSVLLL…WESGLFLPRN (84 aa)) are excised as a propeptide. Residues 649–727 (SSVLLLDSKA…QWESGLFLPR (79 aa)) are C3a-like domain. The region spanning 672 to 707 (CCEDSMHENPMGYTCEKRAKYIQEGDACKAAFLECC) is the Anaphylatoxin-like domain. The factor B binding site stretch occupies residues 731 to 742 (EDGFIQDSDIIP). A propeptide spanning residues 981–1259 (HLIITPSGCG…VMLFQALAEY (279 aa)) is cleaved from the precursor. The tract at residues 981-1259 (HLIITPSGCG…VMLFQALAEY (279 aa)) is C3d-like domain. The isoglutamyl cysteine thioester (Cys-Gln) cross-link spans 989-992 (CGEQ). The segment at 1186–1249 (VLMAASTGKN…GGTYGQTQAT (64 aa)) is factor H binding site. Residues 1496 to 1639 (CSLLSQQEKI…LSNILTIFGC (144 aa)) form the NTR domain.

It belongs to the venom complement C3 homolog family. In terms of assembly, heterotrimer of alpha, beta and gamma chains; disulfide-linked. May be active with factor B in the presence of factor D. First processed by the removal of 4 Arg residues by furin-type protease, forming two chains, alpha and gamma/beta precursor, linked by a disulfide bond. Probably, a cobrin-like protease cleaves the C3a-like domain and then the C3d-like domain, generating the mature venom factor (OVF). Post-translationally, the beta chain is not glycosylated. In terms of tissue distribution, expressed by the venom gland.

The protein resides in the secreted. Complement-activating protein in cobra venom. It is a structural and functional analog of complement component C3b, the activated form of C3. It binds factor B (CFB), which is subsequently cleaved by factor D (CFD) to form the bimolecular complex OVF/Bb. OVF/Bb is a C3/C5 convertase that cleaves both complement components C3 and C5. Structurally, it resembles the C3b degradation product C3c, which is not able to form a C3/C5 convertase. Unlike C3b/Bb, OVF/Bb is a stable complex and completely resistant to the actions of complement regulatory factors H (CFH) and I (CFI). Therefore, OVF continuously activates complement. As a result, OVF exhibits complement-depleting activity. This is Ophiophagus venom factor from Ophiophagus hannah (King cobra).